Reading from the N-terminus, the 58-residue chain is Large ribosomal subunit protein bL32 (58 aa).

It belongs to the bacterial ribosomal protein bL32 family.

This chain is Large ribosomal subunit protein bL32, found in Caldicellulosiruptor bescii (strain ATCC BAA-1888 / DSM 6725 / KCTC 15123 / Z-1320) (Anaerocellum thermophilum).